The sequence spans 460 residues: Bifunctional protein GlmU (460 aa).

Residues 1–229 are pyrophosphorylase; sequence MTNYAIILAA…FNESLGVNDR (229 aa). Residues 8-11, Lys22, Gln72, and 77-78 each bind UDP-N-acetyl-alpha-D-glucosamine; these read LAAG and GT. Residue Asp102 participates in Mg(2+) binding. Residues Gly139, Glu154, Asn169, and Asn227 each contribute to the UDP-N-acetyl-alpha-D-glucosamine site. Asn227 contacts Mg(2+). Residues 230–250 form a linker region; sequence VALATAETVMRQRITQKHMVN. The segment at 251 to 460 is N-acetyltransferase; that stretch reads GVTFQNPETV…RLAHHPSRSK (210 aa). UDP-N-acetyl-alpha-D-glucosamine is bound by residues Arg332 and Lys350. His362 serves as the catalytic Proton acceptor. The UDP-N-acetyl-alpha-D-glucosamine site is built by Tyr365 and Asn376. Acetyl-CoA-binding positions include Ala379, 385–386, Ser404, Ala422, and Arg439; that span reads NY.

In the N-terminal section; belongs to the N-acetylglucosamine-1-phosphate uridyltransferase family. The protein in the C-terminal section; belongs to the transferase hexapeptide repeat family. In terms of assembly, homotrimer. It depends on Mg(2+) as a cofactor.

The protein resides in the cytoplasm. The catalysed reaction is alpha-D-glucosamine 1-phosphate + acetyl-CoA = N-acetyl-alpha-D-glucosamine 1-phosphate + CoA + H(+). It catalyses the reaction N-acetyl-alpha-D-glucosamine 1-phosphate + UTP + H(+) = UDP-N-acetyl-alpha-D-glucosamine + diphosphate. Its pathway is nucleotide-sugar biosynthesis; UDP-N-acetyl-alpha-D-glucosamine biosynthesis; N-acetyl-alpha-D-glucosamine 1-phosphate from alpha-D-glucosamine 6-phosphate (route II): step 2/2. It functions in the pathway nucleotide-sugar biosynthesis; UDP-N-acetyl-alpha-D-glucosamine biosynthesis; UDP-N-acetyl-alpha-D-glucosamine from N-acetyl-alpha-D-glucosamine 1-phosphate: step 1/1. The protein operates within bacterial outer membrane biogenesis; LPS lipid A biosynthesis. Catalyzes the last two sequential reactions in the de novo biosynthetic pathway for UDP-N-acetylglucosamine (UDP-GlcNAc). The C-terminal domain catalyzes the transfer of acetyl group from acetyl coenzyme A to glucosamine-1-phosphate (GlcN-1-P) to produce N-acetylglucosamine-1-phosphate (GlcNAc-1-P), which is converted into UDP-GlcNAc by the transfer of uridine 5-monophosphate (from uridine 5-triphosphate), a reaction catalyzed by the N-terminal domain. This chain is Bifunctional protein GlmU, found in Streptococcus pyogenes serotype M6 (strain ATCC BAA-946 / MGAS10394).